The chain runs to 283 residues: MIIRKCYINNPNPFFTPPKNNKRRPSFICYAMKRASEIDVARCELNYILQIKNIKIGFPVKRFRRLNEHRACAMRAMVLAMLYHFNISSDLVQASVEQLSDECGLSTLSKAGNKSITRASRLITNFMEPMGFVTCKKTWDKILGNYMPKMITLTPLFFMLFGVSEKKLMDAKKQQLGWINKNLISKGFKPITMIDAKRRSKDTQIKNIFQYRISKHAFYKKKRNAQRLISLDEKEARQTILRALVAKYSITELTKLGPNGLKKQVNISYYYLRKIATNTYPDN.

It belongs to the IncFII RepA family.

Its function is as follows. This protein is essential for plasmid replication; it is involved in copy control functions. This Buchnera aphidicola subsp. Acyrthosiphon pisum (strain APS) (Acyrthosiphon pisum symbiotic bacterium) protein is Probable replication-associated protein repA1 (repA1).